A 304-amino-acid polypeptide reads, in one-letter code: MENHEQTSFTFEIDNFLEKGDAISPIFISGGCEWFIRVWQIEDHLAVTLSVPNLESLRYGWERRTKYSFIVLNQSGRELERTFEVEGLFCTELLEWCHPKVMPTNKLQEVCLENNKLIIEVQVKVLEVVHEGGVTTEKEMFNIEGFDVLYTQVSRVSWLFVEHPNIAVDVRIKNQLVRTAYINVLLGLIETLDRSPRSLSETDLRDAHIELSELTEAGFKVDWLKKKLEEVSLARKNDISDGSQVEELEEHVKNLKLELDNEKIKSSTASERVLLLEKEVLDLKIELDRTRRGQPNLLYLKLRY.

In terms of domain architecture, MATH spans 6–123 (QTSFTFEIDN…NNKLIIEVQV (118 aa)). Residues 219 to 292 (FKVDWLKKKL…LKIELDRTRR (74 aa)) adopt a coiled-coil conformation.

The polypeptide is MATH domain and coiled-coil domain-containing protein At2g42470 (Arabidopsis thaliana (Mouse-ear cress)).